We begin with the raw amino-acid sequence, 202 residues long: Nascent polypeptide-associated complex subunit alpha (202 aa).

The segment covering Met-1 to Val-19 has biased composition (basic and acidic residues). Positions Met-1–Val-44 are disordered. The span at Ala-22–Glu-32 shows a compositional bias: acidic residues. Residues Ser-46–Ala-111 form the NAC-A/B domain. The segment at Gln-118–Ala-165 is disordered. Residues Ala-125 to Ala-150 are compositionally biased toward basic and acidic residues. Acidic residues predominate over residues Glu-151–Gly-162. The UBA domain occupies Leu-163 to Ile-202.

It belongs to the NAC-alpha family. Part of the nascent polypeptide-associated complex (NAC), consisting of egd2 and egd1. NAC associates with ribosomes via egd1.

The protein localises to the cytoplasm. The protein resides in the nucleus. In terms of biological role, component of the nascent polypeptide-associated complex (NAC), a dynamic component of the ribosomal exit tunnel, protecting the emerging polypeptides from interaction with other cytoplasmic proteins to ensure appropriate nascent protein targeting. The NAC complex also promotes mitochondrial protein import by enhancing productive ribosome interactions with the outer mitochondrial membrane and blocks the inappropriate interaction of ribosomes translating non-secretory nascent polypeptides with translocation sites in the membrane of the endoplasmic reticulum. Egd2 may also be involved in transcription regulation. This chain is Nascent polypeptide-associated complex subunit alpha (egd2), found in Aspergillus terreus (strain NIH 2624 / FGSC A1156).